The chain runs to 71 residues: Phosphatidylinositol N-acetylglucosaminyltransferase subunit Y (71 aa).

Residues 1–3 lie on the Cytoplasmic side of the membrane; sequence MFL. The chain crosses the membrane as a helical span at residues 4 to 26; sequence SLPTLTVLIPLVSLAGLFYSASV. Residues 27 to 44 are Lumenal-facing; sequence EENFPQGCTSTASLCFYS. A helical membrane pass occupies residues 45-65; that stretch reads LLLPITIPVYVFFHLWTWMGI. The Cytoplasmic segment spans residues 66–71; sequence KLFRHN.

As to quaternary structure, component of the glycosylphosphatidylinositol-N-acetylglucosaminyltransferase (GPI-GnT) complex composed at least by PIGA, PIGC, PIGH, PIGP, PIGQ, PIGY and DPM2. Interacts directly with PIGA; this interaction regulates glycosylphosphatidylinositol-N-acetylglucosaminyltransferase activity. Does not interact with Ras proteins.

The protein resides in the endoplasmic reticulum membrane. It participates in glycolipid biosynthesis; glycosylphosphatidylinositol-anchor biosynthesis. Part of the glycosylphosphatidylinositol-N-acetylglucosaminyltransferase (GPI-GnT) complex that catalyzes the transfer of N-acetylglucosamine from UDP-N-acetylglucosamine to phosphatidylinositol and participates in the first step of GPI biosynthesis. May act by regulating the catalytic subunit PIGA. The polypeptide is Phosphatidylinositol N-acetylglucosaminyltransferase subunit Y (Homo sapiens (Human)).